Here is a 310-residue protein sequence, read N- to C-terminus: Zinc finger protein unc-98 (310 aa).

The segment covering 73-84 (GSSSAQTPTKSS) has biased composition (polar residues). Residues 73 to 102 (GSSSAQTPTKSSGGALDGSDQQEVRQDGTS) are disordered. 2 C2H2-type zinc fingers span residues 113 to 135 (YKCR…ERIH) and 141 to 163 (YVCG…AAQH). The C2H2-type 3; degenerate zinc finger occupies 169 to 188 (YKCECGRTFFSYTEMLYHKH). An interaction with myo-3 region spans residues 198–310 (APETTTIKVS…RTSGYVTPRF (113 aa)). A C2H2-type 4 zinc finger spans residues 246–268 (YICEYCSKSYSDSRGLAYHMYSH).

In terms of assembly, interacts with hum-6, mep-1, myo-3, unc-96 and unc-97/PINCH. In terms of tissue distribution, expressed in embryos from 1.5- to 2-fold stage in myofibrils. In larvae and adults, it is expressed in body wall muscle, and in addition, anal depressor muscle and vulval muscles. More specifically it is found in the thick filaments of muscle fibers.

Its subcellular location is the nucleus. It localises to the cytoplasm. Probable transcription factor required for muscle structure. Its dual subcellular localization suggests that it may function both as a muscle adhesion complex protein and as a transcription factor, or work together with transcription factors, to influence gene expression. Thought to act as a molecular bridge between unc-97 and myo-3 at the M-line of muscles, possibly in a signaling role. Plays a role in the formation of muscle connections, also called muscle arm extensions, between the body wall and the motor axons in the dorsal and ventral cord. The protein is Zinc finger protein unc-98 (unc-98) of Caenorhabditis elegans.